The chain runs to 68 residues: uncharacterized protein (68 aa).

Positions 2-67 (KTITLNIKGI…VIEDAGFDAT (66 aa)) constitute an HMA domain. Positions 13 and 16 each coordinate a metal cation.

This is an uncharacterized protein from Haemophilus influenzae (strain ATCC 51907 / DSM 11121 / KW20 / Rd).